The chain runs to 253 residues: Imidazole glycerol phosphate synthase subunit HisF (253 aa).

Catalysis depends on residues aspartate 11 and aspartate 130.

Belongs to the HisA/HisF family. As to quaternary structure, heterodimer of HisH and HisF.

It localises to the cytoplasm. It carries out the reaction 5-[(5-phospho-1-deoxy-D-ribulos-1-ylimino)methylamino]-1-(5-phospho-beta-D-ribosyl)imidazole-4-carboxamide + L-glutamine = D-erythro-1-(imidazol-4-yl)glycerol 3-phosphate + 5-amino-1-(5-phospho-beta-D-ribosyl)imidazole-4-carboxamide + L-glutamate + H(+). It functions in the pathway amino-acid biosynthesis; L-histidine biosynthesis; L-histidine from 5-phospho-alpha-D-ribose 1-diphosphate: step 5/9. Its function is as follows. IGPS catalyzes the conversion of PRFAR and glutamine to IGP, AICAR and glutamate. The HisF subunit catalyzes the cyclization activity that produces IGP and AICAR from PRFAR using the ammonia provided by the HisH subunit. The polypeptide is Imidazole glycerol phosphate synthase subunit HisF (Acidithiobacillus ferrooxidans (strain ATCC 23270 / DSM 14882 / CIP 104768 / NCIMB 8455) (Ferrobacillus ferrooxidans (strain ATCC 23270))).